The chain runs to 422 residues: Glucose-1-phosphate adenylyltransferase (422 aa).

Alpha-D-glucose 1-phosphate contacts are provided by residues Tyr-108, Gly-173, 188 to 189 (EK), and Ser-206.

Belongs to the bacterial/plant glucose-1-phosphate adenylyltransferase family. In terms of assembly, homotetramer.

The enzyme catalyses alpha-D-glucose 1-phosphate + ATP + H(+) = ADP-alpha-D-glucose + diphosphate. Its pathway is glycan biosynthesis; glycogen biosynthesis. In terms of biological role, involved in the biosynthesis of ADP-glucose, a building block required for the elongation reactions to produce glycogen. Catalyzes the reaction between ATP and alpha-D-glucose 1-phosphate (G1P) to produce pyrophosphate and ADP-Glc. This chain is Glucose-1-phosphate adenylyltransferase, found in Paraburkholderia phymatum (strain DSM 17167 / CIP 108236 / LMG 21445 / STM815) (Burkholderia phymatum).